We begin with the raw amino-acid sequence, 218 residues long: Hypoxanthine-guanine phosphoribosyltransferase (218 aa).

K69 is a GMP binding site. The residue at position 103 (K103) is an N6-acetyllysine. K115 is covalently cross-linked (Glycyl lysine isopeptide (Lys-Gly) (interchain with G-Cter in SUMO1); alternate). K115 participates in a covalent cross-link: Glycyl lysine isopeptide (Lys-Gly) (interchain with G-Cter in SUMO2); alternate. GMP is bound by residues 134–142 (EDIIDTGKT), K166, 186–188 (KFV), and D194. Residue D138 is the Proton acceptor of the active site. T142 bears the Phosphothreonine mark. D194 is a binding site for Mg(2+).

The protein belongs to the purine/pyrimidine phosphoribosyltransferase family. Homotetramer. Mg(2+) serves as cofactor.

The protein resides in the cytoplasm. The catalysed reaction is IMP + diphosphate = hypoxanthine + 5-phospho-alpha-D-ribose 1-diphosphate. It catalyses the reaction GMP + diphosphate = guanine + 5-phospho-alpha-D-ribose 1-diphosphate. The protein operates within purine metabolism; IMP biosynthesis via salvage pathway; IMP from hypoxanthine: step 1/1. Converts guanine to guanosine monophosphate, and hypoxanthine to inosine monophosphate. Transfers the 5-phosphoribosyl group from 5-phosphoribosylpyrophosphate onto the purine. Plays a central role in the generation of purine nucleotides through the purine salvage pathway. In Rattus norvegicus (Rat), this protein is Hypoxanthine-guanine phosphoribosyltransferase (Hprt1).